The following is a 492-amino-acid chain: Protein odr-4 homolog (492 aa).

Positions 251-270 (LQPTSTTGGTATASSNTTDS) are disordered. The segment covering 254-268 (TSTTGGTATASSNTT) has biased composition (low complexity). A helical transmembrane segment spans residues 469–489 (MVGIAVALLVLLSSVALHFVL).

Belongs to the ODR-4 family.

It localises to the membrane. Functionally, may play a role in the trafficking of a subset of G-protein coupled receptors. This chain is Protein odr-4 homolog, found in Drosophila melanogaster (Fruit fly).